The primary structure comprises 861 residues: Integrator complex subunit 6-like (861 aa).

The VWFA domain maps to I3–V227. Residues P605–S626 form a disordered region. The residue at position 617 (S617) is a Phosphoserine.

The sequence is that of Integrator complex subunit 6-like (INTS6L) from Homo sapiens (Human).